The primary structure comprises 378 residues: Endopolygalacturonase I (378 aa).

A signal peptide spans 1–20 (MHLNTTLLVSLALGAASVLA). A propeptide spanning residues 21–39 (SPAPPAITAPPTAEEIAKR) is cleaved from the precursor. An intrachain disulfide couples Cys43 to Cys61. The O-linked (Man...) threonine glycan is linked to Thr44. O-linked (Man...) serine glycans are attached at residues Ser46, Ser48, Ser52, Ser53, Ser55, Ser57, and Ser62. Residue Thr63 is glycosylated (O-linked (Man...) threonine). Ser73 carries O-linked (Man...) serine glycosylation. PbH1 repeat units follow at residues 174–204 (SDYL…DIGT), 205–226 (STYV…AVNS), 227–247 (GENI…SIGS), 256–277 (VKNV…RIKT), and 285–307 (VSDV…VVQQ). Asp219 acts as the Proton donor in catalysis. A disulfide bridge connects residues Cys221 and Cys237. His241 is an active-site residue. A glycan (N-linked (GlcNAc...) asparagine) is linked at Asn258. Intrachain disulfides connect Cys345–Cys350 and Cys369–Cys378.

It belongs to the glycosyl hydrolase 28 family.

The protein localises to the secreted. It carries out the reaction (1,4-alpha-D-galacturonosyl)n+m + H2O = (1,4-alpha-D-galacturonosyl)n + (1,4-alpha-D-galacturonosyl)m.. Functionally, involved in maceration and soft-rotting of plant tissue. Hydrolyzes the 1,4-alpha glycosidic bonds of de-esterified pectate in the smooth region of the plant cell wall. This chain is Endopolygalacturonase I (pgaI), found in Aspergillus aculeatus.